The chain runs to 193 residues: Auxin-induced protein 22D (193 aa).

Residues 16–68 (ATELRLGLPGSDEPEKRATARSNKRSSPEASDEESISNGSDVTKEDNVVPPAK) form a disordered region. The EAR-like (transcriptional repression) motif lies at 19-23 (LRLGL). Residues 97–184 (GMYVKVSMAG…SCKRLRIMKG (88 aa)) form the PB1 domain.

This sequence belongs to the Aux/IAA family. In terms of assembly, homodimers and heterodimers.

It localises to the nucleus. Aux/IAA proteins are short-lived transcriptional factors that function as repressors of early auxin response genes at low auxin concentrations. Repression is thought to result from the interaction with auxin response factors (ARFs), proteins that bind to the auxin-responsive promoter element (AuxRE). Formation of heterodimers with ARF proteins may alter their ability to modulate early auxin response genes expression. The chain is Auxin-induced protein 22D (AUX22D) from Vigna radiata var. radiata (Mung bean).